The chain runs to 264 residues: DNA repair protein RecO (264 aa).

The protein belongs to the RecO family.

Functionally, involved in DNA repair and RecF pathway recombination. In Chlorobium luteolum (strain DSM 273 / BCRC 81028 / 2530) (Pelodictyon luteolum), this protein is DNA repair protein RecO.